We begin with the raw amino-acid sequence, 255 residues long: Syntaxin-6 (255 aa).

An N-acetylserine modification is found at Ser2. At Ser2 the chain carries Phosphoserine. The segment at 2 to 168 (SMEDPFFVVK…QAQQQLIVEQ (167 aa)) is required for interaction with VPS51. Topologically, residues 2–234 (SMEDPFFVVK…VSHMTSDRRQ (233 aa)) are cytoplasmic. A coiled-coil region spans residues 41–74 (EEIDWTTNELRNNLRSIEWDLEDLDETISIVEAN). Residues Ser129 and Ser152 each carry the phosphoserine modification. Residues 163–225 (QLIVEQQDEQ…DNVMKKLAKV (63 aa)) enclose the t-SNARE coiled-coil homology domain. Residues 235–255 (WCAIAILFAVLVVVLILFLVL) form a helical; Anchor for type IV membrane protein membrane-spanning segment.

Belongs to the syntaxin family. In terms of assembly, identified in a complex containing STX6, STX12 and VAMP4. This complex also includes VTI1A. Binds EEA1. Interacts with VPS45A and GOPC. Interacts with MARCHF2; the interaction promotes MARCHF2-mediated ubiquitination and degradation of CFTR. Interacts with MARCHF3. Interacts with BLTP3B (via C-terminal coiled-coil domain). Interacts with BAIAP3; this interaction is increased in the presence of calcium. Interacts with VPS13B.

It is found in the golgi apparatus membrane. Its subcellular location is the golgi apparatus. The protein localises to the trans-Golgi network membrane. It localises to the recycling endosome membrane. In terms of biological role, SNARE promoting movement of transport vesicles to target membranes. Targets endosomes to the trans-Golgi network, and may therefore function in retrograde trafficking. Together with SNARE STX12, promotes movement of vesicles from endosomes to the cell membrane, and may therefore function in the endocytic recycling pathway. This Mus musculus (Mouse) protein is Syntaxin-6 (Stx6).